The primary structure comprises 1193 residues: Nucleolar protein 6 (1193 aa).

Disordered regions lie at residues Met-1–Val-69 and Lys-1137–Lys-1193. Basic and acidic residues-rich tracts occupy residues Ala-31 to Lys-46 and Asp-1151 to Pro-1161. Residue Ser-35 is modified to Phosphoserine. Basic residues predominate over residues Lys-1162–Ile-1184.

The protein belongs to the NRAP family. Part of the small subunit (SSU) processome, composed of more than 70 proteins and the RNA chaperone small nucleolar RNA (snoRNA) U3. As to expression, expressed in nurse cells at stages 9-10 of oogenesis and exported to the oocyte.

It is found in the nucleus. Its subcellular location is the nucleolus. It localises to the chromosome. Functionally, part of the small subunit (SSU) processome, first precursor of the small eukaryotic ribosomal subunit. During the assembly of the SSU processome in the nucleolus, many ribosome biogenesis factors, an RNA chaperone and ribosomal proteins associate with the nascent pre-rRNA and work in concert to generate RNA folding, modifications, rearrangements and cleavage as well as targeted degradation of pre-ribosomal RNA by the RNA exosome. This chain is Nucleolar protein 6, found in Drosophila melanogaster (Fruit fly).